The sequence spans 208 residues: Small ribosomal subunit protein uS4 (208 aa).

An S4 RNA-binding domain is found at 98–158 (RRLDNVVYRL…EKSRKIACIN (61 aa)).

Belongs to the universal ribosomal protein uS4 family. In terms of assembly, part of the 30S ribosomal subunit. Contacts protein S5. The interaction surface between S4 and S5 is involved in control of translational fidelity.

Functionally, one of the primary rRNA binding proteins, it binds directly to 16S rRNA where it nucleates assembly of the body of the 30S subunit. In terms of biological role, with S5 and S12 plays an important role in translational accuracy. The polypeptide is Small ribosomal subunit protein uS4 (Geobacter sulfurreducens (strain ATCC 51573 / DSM 12127 / PCA)).